Consider the following 447-residue polypeptide: Polyamine export protein (447 aa).

Over 1 to 4 (MLNS) the chain is Cytoplasmic. A CNNM transmembrane domain is found at 1 to 197 (MLNSILVILC…ALAGVLRKQE (197 aa)). The chain crosses the membrane as a helical span at residues 5–25 (ILVILCLIAVSAFFSMSEISL). Residues 26 to 54 (AASRKIKLKLLADEGNINAQRVLNMQENP) lie on the Periplasmic side of the membrane. A helical membrane pass occupies residues 55–75 (GMFFTVVQIGLNAVAILGGIV). Over 76–99 (GDAAFSPAFHSLFSRYMSAELSEQ) the chain is Cytoplasmic. A helical membrane pass occupies residues 100-120 (LSFILSFSLVTGMFILFADLT). Residues 121–141 (PKRIGMIAPEAVALRIINPMR) lie on the Periplasmic side of the membrane. The chain crosses the membrane as a helical span at residues 142–162 (FCLYVCTPLVWFFNGLANIIF). Over 163–447 (RIFKLPMVRK…DAKDKEESVA (285 aa)) the chain is Cytoplasmic. CBS domains are found at residues 216–275 (MTPR…NQSL) and 282–343 (QIRN…GLEE).

The protein belongs to the UPF0053 family. PaeA subfamily.

Its subcellular location is the cell inner membrane. Functionally, involved in cadaverine and putrescine tolerance in stationary phase. May facilitate the efflux of both cadaverine and putrescine from the cytoplasm, reducing potentially toxic levels under certain stress conditions. This is Polyamine export protein from Escherichia coli O157:H7.